The primary structure comprises 186 residues: Ribosome-recycling factor (186 aa).

Belongs to the RRF family.

It localises to the cytoplasm. Functionally, responsible for the release of ribosomes from messenger RNA at the termination of protein biosynthesis. May increase the efficiency of translation by recycling ribosomes from one round of translation to another. The polypeptide is Ribosome-recycling factor (Acidovorax ebreus (strain TPSY) (Diaphorobacter sp. (strain TPSY))).